Here is a 204-residue protein sequence, read N- to C-terminus: Thymidylate kinase (204 aa).

9–16 (GLDGAGKS) serves as a coordination point for ATP.

This sequence belongs to the thymidylate kinase family.

It catalyses the reaction dTMP + ATP = dTDP + ADP. Phosphorylation of dTMP to form dTDP in both de novo and salvage pathways of dTTP synthesis. This is Thymidylate kinase from Francisella philomiragia subsp. philomiragia (strain ATCC 25017 / CCUG 19701 / FSC 153 / O#319-036).